We begin with the raw amino-acid sequence, 150 residues long: 3-dehydroquinate dehydratase (150 aa).

Tyr26 functions as the Proton acceptor in the catalytic mechanism. Asn77, His83, and Asp90 together coordinate substrate. Residue His103 is the Proton donor of the active site. Residues 104 to 105 (LS) and Arg114 contribute to the substrate site.

The protein belongs to the type-II 3-dehydroquinase family. As to quaternary structure, homododecamer.

The enzyme catalyses 3-dehydroquinate = 3-dehydroshikimate + H2O. The protein operates within metabolic intermediate biosynthesis; chorismate biosynthesis; chorismate from D-erythrose 4-phosphate and phosphoenolpyruvate: step 3/7. Catalyzes a trans-dehydration via an enolate intermediate. The sequence is that of 3-dehydroquinate dehydratase from Klebsiella pneumoniae (strain 342).